Consider the following 542-residue polypeptide: Putative CTP synthase (542 aa).

The amidoligase domain stretch occupies residues 1-277 (MEIDLMKHIQ…HKTILDFFSL (277 aa)). S23 provides a ligand contact to CTP. S23 serves as a coordination point for UTP. ATP-binding positions include 24-29 (SLGKGV) and D81. Mg(2+) contacts are provided by D81 and E151. CTP contacts are provided by residues 158–160 (DIE), 198–203 (KTKPTQ), and K234. Residues 198–203 (KTKPTQ) and K234 contribute to the UTP site. Residues 310–542 (YVELPDAYKS…LKMSLKIKES (233 aa)) form the Glutamine amidotransferase type-1 domain. Residue E517 is part of the active site.

The protein belongs to the CTP synthase family. As to quaternary structure, homotetramer.

The catalysed reaction is UTP + L-glutamine + ATP + H2O = CTP + L-glutamate + ADP + phosphate + 2 H(+). It carries out the reaction L-glutamine + H2O = L-glutamate + NH4(+). It catalyses the reaction UTP + NH4(+) + ATP = CTP + ADP + phosphate + 2 H(+). Its pathway is pyrimidine metabolism; CTP biosynthesis via de novo pathway; CTP from UDP: step 2/2. Its activity is regulated as follows. Allosterically activated by GTP, when glutamine is the substrate; GTP has no effect on the reaction when ammonia is the substrate. The allosteric effector GTP functions by stabilizing the protein conformation that binds the tetrahedral intermediate(s) formed during glutamine hydrolysis. Inhibited by the product CTP, via allosteric rather than competitive inhibition. Catalyzes the ATP-dependent amination of UTP to CTP with either L-glutamine or ammonia as the source of nitrogen. Regulates intracellular CTP levels through interactions with the four ribonucleotide triphosphates. The polypeptide is Putative CTP synthase (Ureaplasma parvum serovar 3 (strain ATCC 700970)).